The primary structure comprises 326 residues: Ribosomal large subunit pseudouridine synthase D (326 aa).

One can recognise an S4 RNA-binding domain in the interval 18–91 (QRLDQALAEM…IPLDIVYEDE (74 aa)). D139 is an active-site residue.

The protein belongs to the pseudouridine synthase RluA family. As to quaternary structure, in late stage pre-50S ribosomal subunit interacts with ObgE and DarP(YjgA).

It localises to the cytoplasm. It catalyses the reaction uridine(1911/1915/1917) in 23S rRNA = pseudouridine(1911/1915/1917) in 23S rRNA. Its function is as follows. Responsible for synthesis of pseudouridine from uracil at positions 1911, 1915 and 1917 in 23S ribosomal RNA. Other positions are not modified. Uridine isomerization occurs as a late step during the assembly of the large ribosomal subunit. Member of a network of 50S ribosomal subunit biogenesis factors (ObgE, RluD, RsfS and DarP(YjgA)) which assembles along the 30S-50S interface, allowing 23S rRNA modification and preventing incorrect 23S rRNA structures from forming. The protein is Ribosomal large subunit pseudouridine synthase D of Escherichia coli (strain K12).